Consider the following 466-residue polypeptide: NADPH:adrenodoxin oxidoreductase, mitochondrial (466 aa).

Ala40, Glu61, Leu69, and Leu105 together coordinate FAD. NADP(+) contacts are provided by residues 176–179, 220–221, and Glu232; these read QGNV and RR. Residues Trp379 and 386 to 388 each bind FAD; that span reads GVI. NADP(+) is bound at residue Gly386.

This sequence belongs to the ferredoxin--NADP reductase type 1 family. FAD is required as a cofactor. Expressed predominantly in prothoracic gland of the larval ring gland and nurse cells of the adult ovary. Low expression is all adult tissues examined.

It is found in the mitochondrion inner membrane. It catalyses the reaction 2 reduced [adrenodoxin] + NADP(+) + H(+) = 2 oxidized [adrenodoxin] + NADPH. The protein operates within steroid metabolism; cholesterol metabolism. Its function is as follows. Required for synthesis of steroid hormones, for olfactory sensory behavior and completion of the second larval molt (a steroid mediated developmental transition) and pupariation. This Drosophila melanogaster (Fruit fly) protein is NADPH:adrenodoxin oxidoreductase, mitochondrial (dare).